The primary structure comprises 202 residues: Ribonuclease HII (202 aa).

The region spanning 12-201 (LLIAGVDEAG…VRQLKLFIPE (190 aa)) is the RNase H type-2 domain. The a divalent metal cation site is built by Asp18, Glu19, and Asp110.

The protein belongs to the RNase HII family. Mn(2+) is required as a cofactor. Requires Mg(2+) as cofactor.

It is found in the cytoplasm. The enzyme catalyses Endonucleolytic cleavage to 5'-phosphomonoester.. Endonuclease that specifically degrades the RNA of RNA-DNA hybrids. This is Ribonuclease HII from Coxiella burnetii (strain CbuK_Q154) (Coxiella burnetii (strain Q154)).